The chain runs to 87 residues: Small ribosomal subunit protein bS21 (87 aa).

A compositionally biased stretch (basic and acidic residues) spans 35-52; the sequence is HYEKPSEKKAREKAEAVR. Residues 35-87 are disordered; it reads HYEKPSEKKAREKAEAVRRARKLARKKLQREGLLPSKPKPAFGADRRPSAAAR. The span at 53 to 62 shows a compositional bias: basic residues; it reads RARKLARKKL. The span at 78–87 shows a compositional bias: basic and acidic residues; the sequence is ADRRPSAAAR.

The protein is Small ribosomal subunit protein bS21 of Rhodopseudomonas palustris (strain ATCC BAA-98 / CGA009).